The following is a 442-amino-acid chain: Zinc finger protein sfp1 (442 aa).

Positions 193–208 are enriched in low complexity; sequence AASSDMSSDEASSQAE. Disordered stretches follow at residues 193-219 and 304-333; these read AASSDMSSDEASSQAETTGTPKKMPES and SPFVRKSSSDLEAKPSKKQRSTPAFSHDSP. 2 consecutive C2H2-type zinc fingers follow at residues 350-375 and 399-422; these read YKCPVPNCDKAYKNQNGLKYHKLHGH and YRCEVCSKRYKNLNGLKYHRTHSH.

The protein resides in the cytoplasm. It localises to the nucleus. The sequence is that of Zinc finger protein sfp1 (sfp1) from Schizosaccharomyces pombe (strain 972 / ATCC 24843) (Fission yeast).